The sequence spans 429 residues: Alpha-L-rhamnosidase rgxB (429 aa).

The first 20 residues, 1–20 (MAPIALKILLFTSLIVPSIS), serve as a signal peptide directing secretion. Residues asparagine 67, asparagine 77, asparagine 97, asparagine 103, asparagine 112, asparagine 135, and asparagine 219 are each glycosylated (N-linked (GlcNAc...) asparagine). A PbH1 1 repeat occupies 217–238 (SKNITLTNWEVVNGDDSISTKA). The Proton donor role is filled by aspartate 231. Residues asparagine 239, asparagine 247, asparagine 278, and asparagine 344 are each glycosylated (N-linked (GlcNAc...) asparagine). PbH1 repeat units follow at residues 240–260 (STDITIANCTFTSGLGIAIGS) and 271–292 (VERLKISNITYEKTTHAVYFKT). Residues cysteine 374 and cysteine 380 are joined by a disulfide bond. 3 N-linked (GlcNAc...) asparagine glycosylation sites follow: asparagine 387, asparagine 395, and asparagine 414.

Belongs to the glycosyl hydrolase 28 family.

The protein resides in the secreted. It carries out the reaction Hydrolysis of terminal non-reducing alpha-L-rhamnose residues in alpha-L-rhamnosides.. Its function is as follows. Alpha-L-rhamnosidase which is able to degrade p-nitrophenyl-alpha-L-rhamnopyranoside (pnp_Rha). The natural substrate of this enzyme has not been identified yet. This is Alpha-L-rhamnosidase rgxB (rgxB) from Aspergillus niger (strain ATCC MYA-4892 / CBS 513.88 / FGSC A1513).